A 150-amino-acid chain; its full sequence is SsrA-binding protein (150 aa).

Belongs to the SmpB family.

The protein localises to the cytoplasm. Required for rescue of stalled ribosomes mediated by trans-translation. Binds to transfer-messenger RNA (tmRNA), required for stable association of tmRNA with ribosomes. tmRNA and SmpB together mimic tRNA shape, replacing the anticodon stem-loop with SmpB. tmRNA is encoded by the ssrA gene; the 2 termini fold to resemble tRNA(Ala) and it encodes a 'tag peptide', a short internal open reading frame. During trans-translation Ala-aminoacylated tmRNA acts like a tRNA, entering the A-site of stalled ribosomes, displacing the stalled mRNA. The ribosome then switches to translate the ORF on the tmRNA; the nascent peptide is terminated with the 'tag peptide' encoded by the tmRNA and targeted for degradation. The ribosome is freed to recommence translation, which seems to be the essential function of trans-translation. The polypeptide is SsrA-binding protein (Campylobacter jejuni subsp. jejuni serotype O:6 (strain 81116 / NCTC 11828)).